The primary structure comprises 130 residues: DNA-directed RNA polymerase subunit omega (130 aa).

Disordered stretches follow at residues 80-99 (PEPD…DADD) and 110-130 (EELL…EEDE). Over residues 110–124 (EELLKGLEGLAPREE) the composition is skewed to basic and acidic residues.

This sequence belongs to the RNA polymerase subunit omega family. In terms of assembly, the RNAP catalytic core consists of 2 alpha, 1 beta, 1 beta' and 1 omega subunit. When a sigma factor is associated with the core the holoenzyme is formed, which can initiate transcription.

The catalysed reaction is RNA(n) + a ribonucleoside 5'-triphosphate = RNA(n+1) + diphosphate. Its function is as follows. Promotes RNA polymerase assembly. Latches the N- and C-terminal regions of the beta' subunit thereby facilitating its interaction with the beta and alpha subunits. This chain is DNA-directed RNA polymerase subunit omega, found in Nitrobacter hamburgensis (strain DSM 10229 / NCIMB 13809 / X14).